We begin with the raw amino-acid sequence, 172 residues long: 3-phenylpropionate/cinnamic acid dioxygenase subunit beta (172 aa).

This sequence belongs to the bacterial ring-hydroxylating dioxygenase beta subunit family. In terms of assembly, this dioxygenase system consists of four proteins: the two subunits of the hydroxylase component (HcaE and HcaF), a ferredoxin (HcaC) and a ferredoxin reductase (HcaD).

The catalysed reaction is 3-phenylpropanoate + NADH + O2 + H(+) = 3-(cis-5,6-dihydroxycyclohexa-1,3-dien-1-yl)propanoate + NAD(+). The enzyme catalyses (E)-cinnamate + NADH + O2 + H(+) = (2E)-3-(cis-5,6-dihydroxycyclohexa-1,3-dien-1-yl)prop-2-enoate + NAD(+). The protein operates within aromatic compound metabolism; 3-phenylpropanoate degradation. In terms of biological role, part of the multicomponent 3-phenylpropionate dioxygenase. Converts 3-phenylpropionic acid (PP) and cinnamic acid (CI) into 3-phenylpropionate-dihydrodiol (PP-dihydrodiol) and cinnamic acid-dihydrodiol (CI-dihydrodiol), respectively. This is 3-phenylpropionate/cinnamic acid dioxygenase subunit beta from Escherichia coli O157:H7.